The sequence spans 216 residues: Ethylene-inducing xylanase (216 aa).

The signal sequence occupies residues 1–19 (MVSFSSLFVAACAAVTAFA). The region spanning 28 to 216 (AITTSQQGTS…SSGSSDITVS (189 aa)) is the GH11 domain. The active-site Nucleophile is Glu-112. Residue Glu-203 is the Proton donor of the active site.

This sequence belongs to the glycosyl hydrolase 11 (cellulase G) family.

Its subcellular location is the secreted. The catalysed reaction is Endohydrolysis of (1-&gt;4)-beta-D-xylosidic linkages in xylans.. It functions in the pathway glycan degradation; xylan degradation. Endo-1,4-beta-xylanase involved in the hydrolysis of xylan, a major structural heterogeneous polysaccharide found in plant biomass representing the second most abundant polysaccharide in the biosphere, after cellulose. Acts as a pathogen-associated molecular pattern (PAMP) that can trigger plant cell death. Triggers a series of immune responses in citrus fruit and enhanced the resistance of citrus and other fruit against fungal pathogens. The protein is Ethylene-inducing xylanase of Penicillium digitatum (strain Pd1 / CECT 20795) (Green mold).